Consider the following 513-residue polypeptide: Histidine ammonia-lyase (513 aa).

Positions 144 to 146 form a cross-link, 5-imidazolinone (Ala-Gly); that stretch reads ASG. Ser145 bears the 2,3-didehydroalanine (Ser) mark.

The protein belongs to the PAL/histidase family. Post-translationally, contains an active site 4-methylidene-imidazol-5-one (MIO), which is formed autocatalytically by cyclization and dehydration of residues Ala-Ser-Gly.

It is found in the cytoplasm. The catalysed reaction is L-histidine = trans-urocanate + NH4(+). It participates in amino-acid degradation; L-histidine degradation into L-glutamate; N-formimidoyl-L-glutamate from L-histidine: step 1/3. This chain is Histidine ammonia-lyase, found in Streptococcus sanguinis (strain SK36).